Consider the following 75-residue polypeptide: ATP synthase subunit c (75 aa).

2 consecutive transmembrane segments (helical) span residues 9-29 and 54-74; these read IGAGLAAIALAGAGVGIGIIF and FALAEATGLFGLVVALIILFA.

This sequence belongs to the ATPase C chain family. As to quaternary structure, F-type ATPases have 2 components, F(1) - the catalytic core - and F(0) - the membrane proton channel. F(1) has five subunits: alpha(3), beta(3), gamma(1), delta(1), epsilon(1). F(0) has three main subunits: a(1), b(2) and c(10-14). The alpha and beta chains form an alternating ring which encloses part of the gamma chain. F(1) is attached to F(0) by a central stalk formed by the gamma and epsilon chains, while a peripheral stalk is formed by the delta and b chains.

The protein resides in the cell inner membrane. Its function is as follows. F(1)F(0) ATP synthase produces ATP from ADP in the presence of a proton or sodium gradient. F-type ATPases consist of two structural domains, F(1) containing the extramembraneous catalytic core and F(0) containing the membrane proton channel, linked together by a central stalk and a peripheral stalk. During catalysis, ATP synthesis in the catalytic domain of F(1) is coupled via a rotary mechanism of the central stalk subunits to proton translocation. Key component of the F(0) channel; it plays a direct role in translocation across the membrane. A homomeric c-ring of between 10-14 subunits forms the central stalk rotor element with the F(1) delta and epsilon subunits. The protein is ATP synthase subunit c of Pelagibacter ubique (strain HTCC1062).